The chain runs to 96 residues: UPF0235 protein YggU (96 aa).

The protein belongs to the UPF0235 family.

The protein is UPF0235 protein YggU of Shigella flexneri.